Consider the following 310-residue polypeptide: L-lactate dehydrogenase (310 aa).

Residues V11, D32, Y62, and 76 to 77 each bind NAD(+); that span reads GV. Substrate is bound by residues Q79, R85, and 117-120; that span reads NPVD. Residues 115–117 and S140 contribute to the NAD(+) site; that span reads ASN. Position 145-148 (145-148) interacts with substrate; it reads DTAR. Positions 150 and 165 each coordinate beta-D-fructose 1,6-bisphosphate. Residue H172 is the Proton acceptor of the active site. T227 lines the substrate pocket.

Belongs to the LDH/MDH superfamily. LDH family. In terms of assembly, homotetramer.

The protein resides in the cytoplasm. The catalysed reaction is (S)-lactate + NAD(+) = pyruvate + NADH + H(+). The protein operates within fermentation; pyruvate fermentation to lactate; (S)-lactate from pyruvate: step 1/1. Allosterically activated by fructose 1,6-bisphosphate (FBP). Its function is as follows. Catalyzes the conversion of lactate to pyruvate. This chain is L-lactate dehydrogenase, found in Allorhizobium ampelinum (strain ATCC BAA-846 / DSM 112012 / S4) (Agrobacterium vitis (strain S4)).